Reading from the N-terminus, the 192-residue chain is Nucleosome assembly protein 1-like 5 (192 aa).

Residues 1–12 (MADSQNQGSAEP) show a composition bias toward polar residues. Residues 1–76 (MADSQNQGSA…APKPRNDFIE (76 aa)) are disordered. 2 stretches are compositionally biased toward low complexity: residues 15-28 (AAAA…AAAA) and 40-55 (GDSD…VVGQ). Positions 86-112 (VLALKKLQKRCDKIEAKFDKEFQALEK) form a coiled coil. Positions 136-192 (AWTLEGDEEDDDDDEYEDEEEGEEEDEEEEEPAAEAAGTAAAKDEGPHSAVPDDAKK) are disordered. Residues 140–168 (EGDEEDDDDDEYEDEEEGEEEDEEEEEPA) show a composition bias toward acidic residues. Positions 177–192 (AKDEGPHSAVPDDAKK) are enriched in basic and acidic residues.

This sequence belongs to the nucleosome assembly protein (NAP) family.

The protein resides in the nucleus. The sequence is that of Nucleosome assembly protein 1-like 5 (NAP1L5) from Bos taurus (Bovine).